We begin with the raw amino-acid sequence, 115 residues long: MKFVLLFGVLLVTLFSYSSAEMLDDFDQADEDELLSLIEKEEARAKECTPRFYDCSHDRHSCYRSELFKDVCTCFYPEGGDNEVCTCQQPKHLKYMEKAAGKAKKFGGKIKKWFG.

The N-terminal stretch at 1 to 20 is a signal peptide; it reads MKFVLLFGVLLVTLFSYSSA. Residues 21–44 constitute a propeptide that is removed on maturation; sequence EMLDDFDQADEDELLSLIEKEEAR. Intrachain disulfides connect Cys-55/Cys-72, Cys-62/Cys-87, and Cys-74/Cys-85.

Belongs to the neurotoxin 19 (CSTX) family. 01 subfamily. As to expression, expressed by the venom gland.

It localises to the secreted. The chain is U3-lycotoxin-Ls1l from Lycosa singoriensis (Wolf spider).